Consider the following 358-residue polypeptide: Isopentenyl-diphosphate delta-isomerase (358 aa).

12 to 13 (RK) lines the substrate pocket. Residues 69–71 (AMT), Ser-99, and Asn-128 each bind FMN. Residue Gln-158 participates in substrate binding. Glu-159 serves as a coordination point for Mg(2+). FMN is bound by residues Lys-190, Thr-220, 267–269 (GIR), and 288–289 (AG).

This sequence belongs to the IPP isomerase type 2 family. As to quaternary structure, homooctamer. Dimer of tetramers. Requires FMN as cofactor. It depends on NADPH as a cofactor. Mg(2+) serves as cofactor.

It is found in the cytoplasm. The catalysed reaction is isopentenyl diphosphate = dimethylallyl diphosphate. Its function is as follows. Involved in the biosynthesis of isoprenoids. Catalyzes the 1,3-allylic rearrangement of the homoallylic substrate isopentenyl (IPP) to its allylic isomer, dimethylallyl diphosphate (DMAPP). The chain is Isopentenyl-diphosphate delta-isomerase from Listeria monocytogenes serovar 1/2a (strain ATCC BAA-679 / EGD-e).